A 293-amino-acid polypeptide reads, in one-letter code: tRNA pseudouridine synthase B (293 aa).

Asp-39 functions as the Nucleophile in the catalytic mechanism.

Belongs to the pseudouridine synthase TruB family. Type 1 subfamily.

The enzyme catalyses uridine(55) in tRNA = pseudouridine(55) in tRNA. Its function is as follows. Responsible for synthesis of pseudouridine from uracil-55 in the psi GC loop of transfer RNAs. The polypeptide is tRNA pseudouridine synthase B (Rickettsia bellii (strain OSU 85-389)).